The sequence spans 186 residues: Peptidyl-tRNA hydrolase (186 aa).

Tyr14 contacts tRNA. His19 serves as the catalytic Proton acceptor. 3 residues coordinate tRNA: Phe64, Asn66, and Asn112.

It belongs to the PTH family. Monomer.

The protein resides in the cytoplasm. The enzyme catalyses an N-acyl-L-alpha-aminoacyl-tRNA + H2O = an N-acyl-L-amino acid + a tRNA + H(+). Its function is as follows. Hydrolyzes ribosome-free peptidyl-tRNAs (with 1 or more amino acids incorporated), which drop off the ribosome during protein synthesis, or as a result of ribosome stalling. In terms of biological role, catalyzes the release of premature peptidyl moieties from peptidyl-tRNA molecules trapped in stalled 50S ribosomal subunits, and thus maintains levels of free tRNAs and 50S ribosomes. This is Peptidyl-tRNA hydrolase from Mycoplasma mycoides subsp. mycoides SC (strain CCUG 32753 / NCTC 10114 / PG1).